A 128-amino-acid chain; its full sequence is Keratin-associated protein 2-3 (128 aa).

The tract at residues 5–112 (CCGSTLSSLS…SVQSPCCRPP (108 aa)) is 10 X 5 AA repeats of C-C-[CDPQRWG]-[APRS]-[CIPSTVD].

It belongs to the KRTAP type 2 family. In terms of assembly, interacts with hair keratins.

In the hair cortex, hair keratin intermediate filaments are embedded in an interfilamentous matrix, consisting of hair keratin-associated proteins (KRTAP), which are essential for the formation of a rigid and resistant hair shaft through their extensive disulfide bond cross-linking with abundant cysteine residues of hair keratins. The matrix proteins include the high-sulfur and high-glycine-tyrosine keratins. The protein is Keratin-associated protein 2-3 (KRTAP2-3) of Homo sapiens (Human).